The primary structure comprises 145 residues: Neuromedin-S (145 aa).

The signal sequence occupies residues 1 to 27 (MRSEKHLLPLPLLLAICCLGTLHLSSG). 2 propeptides span residues 28–89 (FPQS…HEIY) and 92–117 (FLFQFSRAKDPSLKIGESQIATAEYT). N136 is subject to Asparagine amide. Residues 140–145 (VSINEH) constitute a propeptide that is removed on maturation.

Belongs to the NmU family. In terms of tissue distribution, expressed by the skin glands.

It is found in the secreted. Its function is as follows. Stimulates uterine smooth muscle contraction (EC(50)=1.6 nM). Synthetic peptide NmS-17 induces calcium mobilization in CHO cells transfected with either human FM-3/GPR66 (EC(50)=0.085 nM) or FM-4/TGR-1 (EC(50)=0.231 nM) NmU/NmS receptors. The protein is Neuromedin-S (nms) of Bombina maxima (Giant fire-bellied toad).